The following is a 301-amino-acid chain: Galectin-6 (301 aa).

2 Galectin domains span residues 19 to 149 and 173 to 301; these read YKRP…INFF and YVGA…YVHI.

The polypeptide is Galectin-6 (Lgals6) (Mus musculus (Mouse)).